The following is a 119-amino-acid chain: Immunity protein WapI (119 aa).

Its function is as follows. Immunity protein component of a toxin-immunity protein module, which functions as a cellular contact-dependent growth inhibition (CDI) system. Neutralizes the tRNase activity of cognate toxin WapA upon expression in E.coli. Does not inhibit WapA from other strains of B.subtilis. The WapA C-terminus cannot be expressed on its own in E.coli, however it can be cloned in the presence of its cognate immunity protein gene. Cell contact is probably necessary for growth inhibition. This Bacillus subtilis subsp. natto (strain BEST195) protein is Immunity protein WapI (wapI).